Consider the following 236-residue polypeptide: Uridylate kinase (236 aa).

ATP is bound at residue 9-12 (KFSG). The involved in allosteric activation by GTP stretch occupies residues 17–22 (GNSGFG). Gly-51 is a binding site for UMP. Residues Gly-52 and Arg-56 each coordinate ATP. Residues Asp-72 and 133 to 140 (TGNPFFTT) contribute to the UMP site. ATP contacts are provided by Thr-160, Tyr-166, and Asp-169.

It belongs to the UMP kinase family. In terms of assembly, homohexamer.

Its subcellular location is the cytoplasm. The catalysed reaction is UMP + ATP = UDP + ADP. The protein operates within pyrimidine metabolism; CTP biosynthesis via de novo pathway; UDP from UMP (UMPK route): step 1/1. Allosterically activated by GTP. Inhibited by UTP. Its function is as follows. Catalyzes the reversible phosphorylation of UMP to UDP. This Helicobacter hepaticus (strain ATCC 51449 / 3B1) protein is Uridylate kinase.